A 147-amino-acid polypeptide reads, in one-letter code: Small ribosomal subunit protein bS6 (147 aa).

The interval V96–E147 is disordered. A compositionally biased stretch (basic and acidic residues) spans K104–E147.

The protein belongs to the bacterial ribosomal protein bS6 family.

Its function is as follows. Binds together with bS18 to 16S ribosomal RNA. This is Small ribosomal subunit protein bS6 from Photobacterium profundum (strain SS9).